Consider the following 127-residue polypeptide: Protein translocase subunit SecE (127 aa).

3 helical membrane passes run 16–36 (AMKWIVVAILLIVAIVGNYLY), 41–61 (LPLRALAVVILIAAAGGVALL), and 96–116 (IVAAVTAVMSLILWGLDGILV).

It belongs to the SecE/SEC61-gamma family. In terms of assembly, component of the Sec protein translocase complex. Heterotrimer consisting of SecY, SecE and SecG subunits. The heterotrimers can form oligomers, although 1 heterotrimer is thought to be able to translocate proteins. Interacts with the ribosome. Interacts with SecDF, and other proteins may be involved. Interacts with SecA.

It is found in the cell inner membrane. Functionally, essential subunit of the Sec protein translocation channel SecYEG. Clamps together the 2 halves of SecY. May contact the channel plug during translocation. The sequence is that of Protein translocase subunit SecE from Salmonella typhi.